The following is a 413-amino-acid chain: Phosphoribosylamine--glycine ligase (413 aa).

Residues 108 to 310 (KQLMDKYRIP…LMQLIIDLEN (203 aa)) enclose the ATP-grasp domain. 134-190 (VETCDLPIVIKKDGLAAGKGVIIAFTREDALDGVKKIYQEEKGKVVFESYLEGEEFS) is an ATP binding site. Residues glutamate 280 and asparagine 282 each coordinate Mg(2+).

This sequence belongs to the GARS family. Mg(2+) serves as cofactor. The cofactor is Mn(2+).

The enzyme catalyses 5-phospho-beta-D-ribosylamine + glycine + ATP = N(1)-(5-phospho-beta-D-ribosyl)glycinamide + ADP + phosphate + H(+). It functions in the pathway purine metabolism; IMP biosynthesis via de novo pathway; N(1)-(5-phospho-D-ribosyl)glycinamide from 5-phospho-alpha-D-ribose 1-diphosphate: step 2/2. In Staphylococcus epidermidis (strain ATCC 12228 / FDA PCI 1200), this protein is Phosphoribosylamine--glycine ligase.